The chain runs to 417 residues: UDP-N-acetylmuramoylalanine--D-glutamate ligase (417 aa).

Position 104-110 (104-110 (GSNGKST)) interacts with ATP.

It belongs to the MurCDEF family.

It is found in the cytoplasm. It carries out the reaction UDP-N-acetyl-alpha-D-muramoyl-L-alanine + D-glutamate + ATP = UDP-N-acetyl-alpha-D-muramoyl-L-alanyl-D-glutamate + ADP + phosphate + H(+). It participates in cell wall biogenesis; peptidoglycan biosynthesis. Cell wall formation. Catalyzes the addition of glutamate to the nucleotide precursor UDP-N-acetylmuramoyl-L-alanine (UMA). The polypeptide is UDP-N-acetylmuramoylalanine--D-glutamate ligase (Francisella tularensis subsp. novicida (strain U112)).